Reading from the N-terminus, the 409-residue chain is PPE family protein PPE32 (409 aa).

It belongs to the mycobacterial PPE family. Interacts with host Toll-like receptor 2 (TLR2).

It is found in the secreted. Its subcellular location is the cell wall. The protein localises to the cell surface. Its function is as follows. Virulence factor that modulates the production of host cytokines. The polypeptide is PPE family protein PPE32 (Mycobacterium tuberculosis (strain CDC 1551 / Oshkosh)).